We begin with the raw amino-acid sequence, 287 residues long: Protein REVEILLE 2 (287 aa).

An HTH myb-type domain is found at 31–85; sequence TITKQREKWTEAEHEKFVEALKLYGRAWRRIEEHVGTKTAVQIRSHAQKFFTKVA. Positions 58–81 form a DNA-binding region, H-T-H motif; the sequence is WRRIEEHVGTKTAVQIRSHAQKFF. The disordered stretch occupies residues 134–177; that stretch reads QDEDNRSPTSVLSAHGSDGLGSIGSNSPNSSSAELSSHTEESLS. The span at 156–169 shows a compositional bias: low complexity; that stretch reads IGSNSPNSSSAELS.

Its subcellular location is the nucleus. Positive regulator for cold-responsive gene expression and cold tolerance. Part of a regulatory feedback loop that controls a subset of the circadian outputs and modulates the central oscillator. Negatively self-regulates its own expression. The sequence is that of Protein REVEILLE 2 (RVE2) from Arabidopsis thaliana (Mouse-ear cress).